Reading from the N-terminus, the 144-residue chain is MELNSIKPGSGSKHAKRRVGRGIGSGLGKTAGRGHKGQKSRAGGYHKVGFEGGQMPLQRRLPKRGFKSHLLKFNAEITLGQLQVLAVDEVDLLLLKQIGLVGELAKVVKVVKSGELTRAVVLKGIGATAGAKAAIEAAGGSLAA.

The disordered stretch occupies residues 1–51 (MELNSIKPGSGSKHAKRRVGRGIGSGLGKTAGRGHKGQKSRAGGYHKVGFE). Over residues 21–31 (RGIGSGLGKTA) the composition is skewed to gly residues.

Belongs to the universal ribosomal protein uL15 family. Part of the 50S ribosomal subunit.

Functionally, binds to the 23S rRNA. The polypeptide is Large ribosomal subunit protein uL15 (Leptothrix cholodnii (strain ATCC 51168 / LMG 8142 / SP-6) (Leptothrix discophora (strain SP-6))).